The following is a 372-amino-acid chain: Maltose/maltodextrin import ATP-binding protein MalK (372 aa).

Residues 4–234 (VSLRNVGKSY…PANRFVAGFI (231 aa)) form the ABC transporter domain. Residue 36–43 (GPSGCGKS) participates in ATP binding.

Belongs to the ABC transporter superfamily. Maltooligosaccharide importer (TC 3.A.1.1.1) family. The complex is composed of two ATP-binding proteins (MalK), two transmembrane proteins (MalG and MalK) and a solute-binding protein (MalE).

It is found in the cell inner membrane. The enzyme catalyses D-maltose(out) + ATP + H2O = D-maltose(in) + ADP + phosphate + H(+). Its function is as follows. Part of the ABC transporter complex MalEFGK involved in maltose/maltodextrin import. Responsible for energy coupling to the transport system. In Mannheimia succiniciproducens (strain KCTC 0769BP / MBEL55E), this protein is Maltose/maltodextrin import ATP-binding protein MalK.